The following is a 323-amino-acid chain: MVDFSKELRALVQSPHSQWLDTLAPQLTAFKNNPHGNLKRWQRVLTQLPNLTAKHVKLSNTVQVGEADEASDADRARLTGLLQQLQPWRKGPFDLFGVFIDTEWRSDWKWQRVAPHLDDLSGRQVLDVGCGSGYHLWRMLEAGAEQVWGIDPGELFLMQFRAISQLMPLSWQQRAHFFPVGIEHMPELKSFDTVFSMGVLYHRRSPVEFLQQLKSLIRPGGQLVLETIVVEGDETTVMMPGERYAQMRNVWFLPSASALSVWLERLGFKDISVVDHNTTSIDEQRRTDWMTGESLADFLDPNDTNKTIEGYQAPIRAVITARV.

Carboxy-S-adenosyl-L-methionine contacts are provided by residues Lys-90, Trp-104, Lys-109, Gly-129, 182 to 183 (IE), Met-197, Tyr-201, and Arg-316.

This sequence belongs to the class I-like SAM-binding methyltransferase superfamily. CmoB family. Homotetramer.

It catalyses the reaction carboxy-S-adenosyl-L-methionine + 5-hydroxyuridine(34) in tRNA = 5-carboxymethoxyuridine(34) in tRNA + S-adenosyl-L-homocysteine + H(+). Its function is as follows. Catalyzes carboxymethyl transfer from carboxy-S-adenosyl-L-methionine (Cx-SAM) to 5-hydroxyuridine (ho5U) to form 5-carboxymethoxyuridine (cmo5U) at position 34 in tRNAs. This Idiomarina loihiensis (strain ATCC BAA-735 / DSM 15497 / L2-TR) protein is tRNA U34 carboxymethyltransferase.